A 295-amino-acid polypeptide reads, in one-letter code: Large ribosomal subunit protein uL2 (295 aa).

Positions 243–295 are disordered; the sequence is WRPHTRGTAMNPVDHPHGGGEGRTRGKHPESPWDGRRRDTRREGVRSTPISLS. Basic and acidic residues predominate over residues 256 to 287; it reads DHPHGGGEGRTRGKHPESPWDGRRRDTRREGV.

It belongs to the universal ribosomal protein uL2 family. In terms of assembly, part of the 50S ribosomal subunit. Forms a bridge to the 30S subunit in the 70S ribosome.

In terms of biological role, one of the primary rRNA binding proteins. Required for association of the 30S and 50S subunits to form the 70S ribosome, for tRNA binding and peptide bond formation. It has been suggested to have peptidyltransferase activity; this is somewhat controversial. Makes several contacts with the 16S rRNA in the 70S ribosome. The polypeptide is Large ribosomal subunit protein uL2 (Aquifex pyrophilus).